Consider the following 370-residue polypeptide: MTVDAVRVELGARAYEVRIGPGLIARAGAEIAPLLRRPKVAILTDETVAGLHLDPFRQALVEAGIASSALALPAGEATKGWPQFARAVEWLLEEKVERRDVVVALGGGVIGDLAGFAAAVLRRGVRFVQVPTTLLAQVDSSVGGKTGINTAQGKNLVGAFHQPSLVLADIGVLETLPPRDFRAGYGEVVKYGLLGDADFYEWLEGAGPRLAADAEARQRAVRRSVEMKAEIVARDETEEGDRALLNLGHTFCHALEKATGYSDRLLHGEGVAIGCALAFELSQRLGLCAQEAPSRLRAHLRAMGMKVDLRDIPGDLPSAEALLALMAQDKKVVDGKLRFILARGIGQAFVADDVPGDVVRALLEDALAER.

NAD(+) is bound by residues 108–112 (GVIGD), 132–133 (TT), Lys-145, and Lys-154. Positions 187, 249, and 267 each coordinate Zn(2+).

The protein belongs to the sugar phosphate cyclases superfamily. Dehydroquinate synthase family. It depends on Co(2+) as a cofactor. Zn(2+) serves as cofactor. NAD(+) is required as a cofactor.

Its subcellular location is the cytoplasm. It catalyses the reaction 7-phospho-2-dehydro-3-deoxy-D-arabino-heptonate = 3-dehydroquinate + phosphate. Its pathway is metabolic intermediate biosynthesis; chorismate biosynthesis; chorismate from D-erythrose 4-phosphate and phosphoenolpyruvate: step 2/7. In terms of biological role, catalyzes the conversion of 3-deoxy-D-arabino-heptulosonate 7-phosphate (DAHP) to dehydroquinate (DHQ). The chain is 3-dehydroquinate synthase from Cereibacter sphaeroides (strain KD131 / KCTC 12085) (Rhodobacter sphaeroides).